The chain runs to 145 residues: Transcriptional regulator MraZ (145 aa).

2 SpoVT-AbrB domains span residues 5–50 and 81–124; these read TFNH…ALPQ and AHEV…DKAA.

Belongs to the MraZ family. Forms oligomers.

The protein localises to the cytoplasm. It is found in the nucleoid. The chain is Transcriptional regulator MraZ from Anaeromyxobacter sp. (strain Fw109-5).